The chain runs to 316 residues: Acetyl-coenzyme A carboxylase carboxyl transferase subunit beta, chloroplastic (316 aa).

Positions 47–316 (LWTRCDNCEN…CKKFQNSFFK (270 aa)) constitute a CoA carboxyltransferase N-terminal domain. Positions 51, 54, 70, and 73 each coordinate Zn(2+). The C4-type zinc finger occupies 51–73 (CDNCENMLYVRFLRQNKRICEEC).

The protein belongs to the AccD/PCCB family. Acetyl-CoA carboxylase is a heterohexamer composed of biotin carboxyl carrier protein, biotin carboxylase and 2 subunits each of ACCase subunit alpha and ACCase plastid-coded subunit beta (accD). Zn(2+) serves as cofactor.

It is found in the plastid. Its subcellular location is the chloroplast stroma. The catalysed reaction is N(6)-carboxybiotinyl-L-lysyl-[protein] + acetyl-CoA = N(6)-biotinyl-L-lysyl-[protein] + malonyl-CoA. It functions in the pathway lipid metabolism; malonyl-CoA biosynthesis; malonyl-CoA from acetyl-CoA: step 1/1. Its function is as follows. Component of the acetyl coenzyme A carboxylase (ACC) complex. Biotin carboxylase (BC) catalyzes the carboxylation of biotin on its carrier protein (BCCP) and then the CO(2) group is transferred by the transcarboxylase to acetyl-CoA to form malonyl-CoA. The sequence is that of Acetyl-coenzyme A carboxylase carboxyl transferase subunit beta, chloroplastic from Marchantia polymorpha (Common liverwort).